A 387-amino-acid chain; its full sequence is tRNA-specific 2-thiouridylase MnmA (387 aa).

ATP contacts are provided by residues 6–13 (AMSGGVDS) and Leu-32. Cys-101 acts as the Nucleophile in catalysis. The cysteines at positions 101 and 199 are disulfide-linked. Gly-125 is a binding site for ATP. The interaction with tRNA stretch occupies residues 148 to 150 (KDQ). The active-site Cysteine persulfide intermediate is the Cys-199.

Belongs to the MnmA/TRMU family.

It is found in the cytoplasm. It catalyses the reaction S-sulfanyl-L-cysteinyl-[protein] + uridine(34) in tRNA + AH2 + ATP = 2-thiouridine(34) in tRNA + L-cysteinyl-[protein] + A + AMP + diphosphate + H(+). Functionally, catalyzes the 2-thiolation of uridine at the wobble position (U34) of tRNA, leading to the formation of s(2)U34. The polypeptide is tRNA-specific 2-thiouridylase MnmA (Clavibacter michiganensis subsp. michiganensis (strain NCPPB 382)).